The following is a 610-amino-acid chain: Pentatricopeptide repeat-containing protein At3g15590, mitochondrial (610 aa).

Residues 1–71 constitute a mitochondrion transit peptide; the sequence is MYSLSRILQR…FSRFFGIHKL (71 aa). The segment at 88-142 is disordered; the sequence is EELSESEEAVPVSGDVPEGVVDDDSLFEPELGSDNDDLEIEEKHSKDGGKPTKKR. The segment covering 107–127 has biased composition (acidic residues); that stretch reads VVDDDSLFEPELGSDNDDLEI. A compositionally biased stretch (basic and acidic residues) spans 128–137; it reads EEKHSKDGGK. 9 PPR repeats span residues 241–275, 276–309, 310–344, 345–379, 380–410, 412–442, 447–481, 482–517, and 518–552; these read GEVVYRTLLANCVLKHHVNKAEDIFNKMKELKFPT, SVFACNQLLLLYSMHDRKKISDVLLLMERENIKP, SRATYHFLINSKGLAGDITGMEKIVETIKEEGIEL, DPELQSILAKYYIRAGLKERAQDLMKEIEGKGLQQ, TPWVCRSLLPLYADIGDSDNVRRLSRFVDQN, RYDNCISAIKAWGKLKEVEEAEAVFERLVEK, PMMPYFALMEIYTENKMLAKGRDLVKRMGNAGIAI, GPSTWHALVKLYIKAGEVGKAELILNRATKDNKMRP, and MFTTYMAILEEYAKRGDVHNTEKVFMKMKRASYAA.

This sequence belongs to the PPR family. P subfamily.

The protein localises to the mitochondrion. This Arabidopsis thaliana (Mouse-ear cress) protein is Pentatricopeptide repeat-containing protein At3g15590, mitochondrial.